The following is a 749-amino-acid chain: Semaphorin-3B (749 aa).

Positions 1–24 are cleaved as a signal peptide; it reads MGRAGAAAVIPGLALLWAVGLGSA. In terms of domain architecture, Sema spans 30–513; the sequence is RLRLSFQELQ…SRSAVAQIAL (484 aa). N82 carries an N-linked (GlcNAc...) asparagine glycan. C102 and C113 are joined by a disulfide. An N-linked (GlcNAc...) asparagine glycan is attached at N124. 3 disulfides stabilise this stretch: C131/C140, C269/C380, and C293/C340. An N-linked (GlcNAc...) asparagine glycan is attached at N427. Disulfide bonds link C516–C534 and C644–C710. The Ig-like C2-type domain maps to 573-659; sequence PALLEHKVFG…GFTQPLRRLS (87 aa). The interval 702 to 749 is disordered; that stretch reads GSANSLRMCRPQPALQSLPLESRRKGRNRRTHAPEPRAERGPRSATHW. The segment covering 733-743 has biased composition (basic and acidic residues); the sequence is HAPEPRAERGP.

The protein belongs to the semaphorin family. In terms of tissue distribution, expressed abundantly but differentially in a variety of neural and nonneural tissues.

It is found in the secreted. It localises to the endoplasmic reticulum. Inhibits axonal extension by providing local signals to specify territories inaccessible for growing axons. The polypeptide is Semaphorin-3B (SEMA3B) (Homo sapiens (Human)).